Consider the following 260-residue polypeptide: DNA repair protein RecO (260 aa).

The protein belongs to the RecO family.

Functionally, involved in DNA repair and RecF pathway recombination. The sequence is that of DNA repair protein RecO from Ligilactobacillus salivarius (strain UCC118) (Lactobacillus salivarius).